A 214-amino-acid polypeptide reads, in one-letter code: Large ribosomal subunit protein bL25 (214 aa).

Residues 194–214 form a disordered region; that stretch reads TTEAEETAEPEVIRRKEEEEE. The span at 204–214 shows a compositional bias: basic and acidic residues; the sequence is EVIRRKEEEEE.

Belongs to the bacterial ribosomal protein bL25 family. CTC subfamily. As to quaternary structure, part of the 50S ribosomal subunit; part of the 5S rRNA/L5/L18/L25 subcomplex. Contacts the 5S rRNA. Binds to the 5S rRNA independently of L5 and L18.

In terms of biological role, this is one of the proteins that binds to the 5S RNA in the ribosome where it forms part of the central protuberance. The chain is Large ribosomal subunit protein bL25 from Thermotoga petrophila (strain ATCC BAA-488 / DSM 13995 / JCM 10881 / RKU-1).